The following is a 90-amino-acid chain: Small ribosomal subunit protein uS15c (90 aa).

The protein belongs to the universal ribosomal protein uS15 family. As to quaternary structure, part of the 30S ribosomal subunit.

The protein localises to the plastid. This chain is Small ribosomal subunit protein uS15c (rps15), found in Cuscuta reflexa (Southern Asian dodder).